Consider the following 310-residue polypeptide: uncharacterized protein (310 aa).

Disordered stretches follow at residues 1–53 (MSNK…NKEM), 78–127 (PIEN…TITN), and 153–217 (QQPL…SQML). Over residues 11 to 25 (GEEDEEEDDLYDDYD) the composition is skewed to acidic residues. 2 stretches are compositionally biased toward polar residues: residues 37 to 49 (STSM…NISL) and 78 to 88 (PIENINENPSP). Composition is skewed to low complexity over residues 94 to 126 (QTQQ…TTIT), 164 to 184 (PSPI…QYIT), and 192 to 208 (YQPI…QIPT). A coiled-coil region spans residues 268 to 299 (DLIKSVQHNIRQYNDDILTLEEKLEQTEWSLQ).

This is an uncharacterized protein from Dictyostelium discoideum (Social amoeba).